The primary structure comprises 290 residues: Bifunctional protein FolD (290 aa).

NADP(+) is bound by residues 169 to 171, Ile-194, and Ile-235; that span reads GAS.

The protein belongs to the tetrahydrofolate dehydrogenase/cyclohydrolase family. Homodimer.

The catalysed reaction is (6R)-5,10-methylene-5,6,7,8-tetrahydrofolate + NADP(+) = (6R)-5,10-methenyltetrahydrofolate + NADPH. It catalyses the reaction (6R)-5,10-methenyltetrahydrofolate + H2O = (6R)-10-formyltetrahydrofolate + H(+). It functions in the pathway one-carbon metabolism; tetrahydrofolate interconversion. Functionally, catalyzes the oxidation of 5,10-methylenetetrahydrofolate to 5,10-methenyltetrahydrofolate and then the hydrolysis of 5,10-methenyltetrahydrofolate to 10-formyltetrahydrofolate. This Helicobacter pylori (strain HPAG1) protein is Bifunctional protein FolD.